Reading from the N-terminus, the 275-residue chain is NH(3)-dependent NAD(+) synthetase (275 aa).

Position 46 to 53 (46 to 53) interacts with ATP; it reads GISGGQDS. D52 contributes to the Mg(2+) binding site. R140 is a deamido-NAD(+) binding site. T160 is an ATP binding site. E165 provides a ligand contact to Mg(2+). The deamido-NAD(+) site is built by K173 and D180. ATP contacts are provided by K189 and T211. Residue 260 to 261 coordinates deamido-NAD(+); the sequence is HK.

This sequence belongs to the NAD synthetase family. In terms of assembly, homodimer.

The catalysed reaction is deamido-NAD(+) + NH4(+) + ATP = AMP + diphosphate + NAD(+) + H(+). Its pathway is cofactor biosynthesis; NAD(+) biosynthesis; NAD(+) from deamido-NAD(+) (ammonia route): step 1/1. Its function is as follows. Catalyzes the ATP-dependent amidation of deamido-NAD to form NAD. Uses ammonia as a nitrogen source. This chain is NH(3)-dependent NAD(+) synthetase, found in Escherichia coli O17:K52:H18 (strain UMN026 / ExPEC).